The primary structure comprises 412 residues: Maintenance of mitochondrial morphology protein 1 (412 aa).

Topologically, residues 1–19 (MAQDVCPTRSEPSLSFLQG) are lumenal. The helical transmembrane segment at 20–40 (LILGQLSVVLLIAAFIKFFIF) threads the bilayer. At 41–412 (GEAPSAEETA…GSLPGIDMPT (372 aa)) the chain is on the cytoplasmic side. One can recognise an SMP-LTD domain in the interval 121 to 337 (QPESLDWFNV…EPRFQEIELP (217 aa)). Residues 372–384 (ARQELDTETDGLR) show a composition bias toward basic and acidic residues. The tract at residues 372-412 (ARQELDTETDGLRYRRRPVGDDTYSVSGSMPGSLPGIDMPT) is disordered.

The protein belongs to the MMM1 family. As to quaternary structure, homodimer. Component of the ER-mitochondria encounter structure (ERMES) or MDM complex, composed of MMM1, MDM10, MDM12 and MDM34. An MMM1 homodimer associates with one molecule of MDM12 on each side in a pairwise head-to-tail manner, and the SMP-LTD domains of MMM1 and MDM12 generate a continuous hydrophobic tunnel for phospholipid trafficking.

Its subcellular location is the endoplasmic reticulum membrane. Component of the ERMES/MDM complex, which serves as a molecular tether to connect the endoplasmic reticulum (ER) and mitochondria. Components of this complex are involved in the control of mitochondrial shape and protein biogenesis, and function in nonvesicular lipid trafficking between the ER and mitochondria. The MDM12-MMM1 subcomplex functions in the major beta-barrel assembly pathway that is responsible for biogenesis of all outer membrane beta-barrel proteins, and acts in a late step after the SAM complex. The MDM10-MDM12-MMM1 subcomplex further acts in the TOM40-specific pathway after the action of the MDM12-MMM1 complex. Essential for establishing and maintaining the structure of mitochondria and maintenance of mtDNA nucleoids. This is Maintenance of mitochondrial morphology protein 1 from Podospora anserina (strain S / ATCC MYA-4624 / DSM 980 / FGSC 10383) (Pleurage anserina).